The chain runs to 278 residues: 2-dehydro-3-deoxyphosphooctonate aldolase (278 aa).

Belongs to the KdsA family.

The protein localises to the cytoplasm. It carries out the reaction D-arabinose 5-phosphate + phosphoenolpyruvate + H2O = 3-deoxy-alpha-D-manno-2-octulosonate-8-phosphate + phosphate. It functions in the pathway carbohydrate biosynthesis; 3-deoxy-D-manno-octulosonate biosynthesis; 3-deoxy-D-manno-octulosonate from D-ribulose 5-phosphate: step 2/3. It participates in bacterial outer membrane biogenesis; lipopolysaccharide biosynthesis. In Bartonella quintana (strain Toulouse) (Rochalimaea quintana), this protein is 2-dehydro-3-deoxyphosphooctonate aldolase.